A 159-amino-acid chain; its full sequence is Transcription elongation factor GreA (159 aa).

This sequence belongs to the GreA/GreB family.

In terms of biological role, necessary for efficient RNA polymerase transcription elongation past template-encoded arresting sites. The arresting sites in DNA have the property of trapping a certain fraction of elongating RNA polymerases that pass through, resulting in locked ternary complexes. Cleavage of the nascent transcript by cleavage factors such as GreA or GreB allows the resumption of elongation from the new 3'terminus. GreA releases sequences of 2 to 3 nucleotides. This is Transcription elongation factor GreA from Orientia tsutsugamushi (strain Boryong) (Rickettsia tsutsugamushi).